A 313-amino-acid chain; its full sequence is Formate-nitrite transporter (313 aa).

At 1-47 the chain is on the cytoplasmic side; it reads MPKSNTKYVIDPLSVKTSCSSEESYIRCVEYGKSKAHYSSLILLAKA. Residues 48–68 form a helical membrane-spanning segment; sequence ILAGVFVGVCAHASGIAGGLF. The Extracellular portion of the chain corresponds to 69–77; sequence YYHKLREYV. Residues 78 to 98 form a helical membrane-spanning segment; the sequence is GASMSAFVYGFTFPIAFLCII. Residues 99-128 are Cytoplasmic-facing; it reads CTGSDLFTGNTLAVTTALLHGKVSCLEYVR. A helical membrane pass occupies residues 129 to 149; the sequence is VMCISLFGNYVGAVSFAFFVS. Residues 150–185 are Extracellular-facing; it reads YGSGAFHKKEQVDKNHIFQFLNDIAVKKVNHTFVEC. N-linked (GlcNAc...) asparagine glycosylation is present at Asn-179. The chain crosses the membrane as a helical span at residues 186–206; the sequence is ICLAIGCNIFVCLAVYFVLSI. Residues 207–211 are Cytoplasmic-facing; it reads KDGSG. A helical membrane pass occupies residues 212–232; the sequence is MVFSVFFAVYAFAIAGYEHII. Residues 233-260 are Extracellular-facing; that stretch reads ANIYTLNISLMIDTEVSFTQVYFKNLLP. A glycan (N-linked (GlcNAc...) asparagine) is linked at Asn-239. The chain crosses the membrane as a helical span at residues 261–281; sequence TLIGNYIAGALVLACPLFFIY. The Cytoplasmic portion of the chain corresponds to 282 to 313; sequence RSYYINYEKMNEPSGGSLRSISIEMKNDGGAT.

Belongs to the FNT transporter (TC 1.A.16) family. As to quaternary structure, homopentamer.

It is found in the cell membrane. Its subcellular location is the vacuole membrane. The enzyme catalyses (S)-lactate(in) + H(+)(in) = (S)-lactate(out) + H(+)(out). It catalyses the reaction formate(in) + H(+)(in) = formate(out) + H(+)(out). The catalysed reaction is pyruvate(out) + H(+)(out) = pyruvate(in) + H(+)(in). It carries out the reaction acetate(out) + H(+)(out) = acetate(in) + H(+)(in). Its activity is regulated as follows. Inhibited by the Malaria Box compound MMV007839 and its derivatives BH296 and BH267.meta. Functionally, monocarboxylate-proton symporter that mediates the efflux of the waste product lactate in the intraerythrocytic parasites; active in acidic-to-neutral pH range. Transports L-lactate. In Plasmodium ovale, this protein is Formate-nitrite transporter.